The sequence spans 1000 residues: Exportin-T (1000 aa).

The protein belongs to the exportin family.

The protein resides in the nucleus. It is found in the cytoplasm. TRNA nucleus export receptor which facilitates tRNA translocation across the nuclear pore complex. Involved in pre-tRNA splicing, probably by affecting the interaction of pre-tRNA with splicing endonuclease. The sequence is that of Exportin-T (LOS1) from Debaryomyces hansenii (strain ATCC 36239 / CBS 767 / BCRC 21394 / JCM 1990 / NBRC 0083 / IGC 2968) (Yeast).